The chain runs to 975 residues: Macrophage colony-stimulating factor 1 receptor 1 (975 aa).

An N-terminal signal peptide occupies residues 1 to 17; that stretch reads MQSFLPLLMGIMASASS. Topologically, residues 18 to 519 are extracellular; sequence VEWRHPVIWF…VEVSDKLFTS (502 aa). Ig-like C2-type domains lie at 34 to 113, 125 to 208, 221 to 310, 329 to 407, and 404 to 513; these read SSEV…VYVK, SLRV…INVI, MDEY…LLVV, GLSV…FHVK, and FHVK…VEVS. Cystine bridges form between C49–C93, C140–C189, and C236–C292. N-linked (GlcNAc...) asparagine glycosylation is found at N156, N165, N246, N250, N289, N301, N399, N420, and N451. An intrachain disulfide couples C426 to C495. The chain crosses the membrane as a helical span at residues 520–540; sequence TLIGAAGVLAIFLLLLVFLLY. At 541–975 the chain is on the cytoplasmic side; it reads KYKQKPRFEI…LMKTNNYQFC (435 aa). A regulatory juxtamembrane domain region spans residues 544 to 576; sequence QKPRFEIRWKIIEAREGNNYTFIDPTQLPYNEK. Y563 carries the phosphotyrosine; by autocatalysis modification. Positions 584–918 constitute a Protein kinase domain; it reads LKLGKVLGAG…MISQMINRLL (335 aa). ATP is bound by residues 590–598 and K619; that span reads LGAGAFGKV. Phosphotyrosine; by autocatalysis occurs at positions 702 and 726. The Proton acceptor role is filled by D782. Positions 800–822 are activation loop; that stretch reads DFGLARDIMNDSNYVVKGNARLP. Y813 and Y929 each carry phosphotyrosine; by autocatalysis. Residues 939-963 form a disordered region; the sequence is EGEACDEPKRYDPPCERSCDHEEEE. Over residues 944-958 the composition is skewed to basic and acidic residues; sequence DEPKRYDPPCERSCD. Y972 carries the phosphotyrosine; by autocatalysis modification.

Belongs to the protein kinase superfamily. Tyr protein kinase family. CSF-1/PDGF receptor subfamily. As to quaternary structure, monomer. Homodimer. Interacts with CSF1. In terms of processing, autophosphorylated in response to CSF1 binding. autophosphorylation, leading to its degradation. Post-translationally, ubiquitinated. Becomes rapidly polyubiquitinated after autophosphorylation, leading to its degradation.

Its subcellular location is the cell membrane. The catalysed reaction is L-tyrosyl-[protein] + ATP = O-phospho-L-tyrosyl-[protein] + ADP + H(+). Its activity is regulated as follows. Present in an inactive conformation in the absence of bound ligand. CSF1 binding leads to dimerization and activation by autophosphorylation on tyrosine residues. Its function is as follows. Tyrosine-protein kinase that acts as a cell-surface receptor for CSF1 and plays an essential role in the regulation of survival, proliferation and differentiation of hematopoietic precursor cells, especially mononuclear phagocytes, such as macrophages and monocytes. Plays an important role in innate immunity and in inflammatory processes. Plays an important role in the regulation of osteoclast proliferation and differentiation, the regulation of bone resorption, and is required for normal bone development. Promotes reorganization of the actin cytoskeleton, regulates formation of membrane ruffles, cell adhesion and cell migration. Activates several signaling pathways in response to ligand binding. This chain is Macrophage colony-stimulating factor 1 receptor 1 (csf1r1), found in Takifugu rubripes (Japanese pufferfish).